The chain runs to 392 residues: 4-hydroxy-3-methylbut-2-en-1-yl diphosphate synthase (flavodoxin) (392 aa).

[4Fe-4S] cluster is bound by residues Cys-280, Cys-283, Cys-315, and Glu-322. The span at 371–380 (TEKGSDHCSE) shows a compositional bias: basic and acidic residues. Positions 371 to 392 (TEKGSDHCSETTRSGSPVVTVN) are disordered. The span at 381–392 (TTRSGSPVVTVN) shows a compositional bias: polar residues.

It belongs to the IspG family. [4Fe-4S] cluster serves as cofactor.

The catalysed reaction is (2E)-4-hydroxy-3-methylbut-2-enyl diphosphate + oxidized [flavodoxin] + H2O + 2 H(+) = 2-C-methyl-D-erythritol 2,4-cyclic diphosphate + reduced [flavodoxin]. It participates in isoprenoid biosynthesis; isopentenyl diphosphate biosynthesis via DXP pathway; isopentenyl diphosphate from 1-deoxy-D-xylulose 5-phosphate: step 5/6. Functionally, converts 2C-methyl-D-erythritol 2,4-cyclodiphosphate (ME-2,4cPP) into 1-hydroxy-2-methyl-2-(E)-butenyl 4-diphosphate. The sequence is that of 4-hydroxy-3-methylbut-2-en-1-yl diphosphate synthase (flavodoxin) from Mycobacterium leprae (strain Br4923).